We begin with the raw amino-acid sequence, 364 residues long: Cobalt-precorrin-5B C(1)-methyltransferase (364 aa).

This sequence belongs to the CbiD family.

The catalysed reaction is Co-precorrin-5B + S-adenosyl-L-methionine = Co-precorrin-6A + S-adenosyl-L-homocysteine. Its pathway is cofactor biosynthesis; adenosylcobalamin biosynthesis; cob(II)yrinate a,c-diamide from sirohydrochlorin (anaerobic route): step 6/10. Catalyzes the methylation of C-1 in cobalt-precorrin-5B to form cobalt-precorrin-6A. In Thermoplasma acidophilum (strain ATCC 25905 / DSM 1728 / JCM 9062 / NBRC 15155 / AMRC-C165), this protein is Cobalt-precorrin-5B C(1)-methyltransferase.